A 233-amino-acid polypeptide reads, in one-letter code: Small ribosomal subunit protein eS4 (233 aa).

The S4 RNA-binding domain occupies 37–99; sequence VPLVVVLRDV…RDEYYRVFPD (63 aa).

It belongs to the eukaryotic ribosomal protein eS4 family.

This Halobacterium salinarum (strain ATCC 29341 / DSM 671 / R1) protein is Small ribosomal subunit protein eS4.